Consider the following 70-residue polypeptide: Large ribosomal subunit protein uL29 (70 aa).

The protein belongs to the universal ribosomal protein uL29 family.

The protein is Large ribosomal subunit protein uL29 of Gloeobacter violaceus (strain ATCC 29082 / PCC 7421).